The sequence spans 428 residues: Enolase 2 (428 aa).

Position 162 (Gln-162) interacts with (2R)-2-phosphoglycerate. Glu-204 functions as the Proton donor in the catalytic mechanism. Positions 241, 285, and 312 each coordinate Mg(2+). Residues Lys-337, Arg-366, Ser-367, and Lys-388 each coordinate (2R)-2-phosphoglycerate. Residue Lys-337 is the Proton acceptor of the active site.

Belongs to the enolase family. Mg(2+) is required as a cofactor.

The protein resides in the cytoplasm. It localises to the secreted. Its subcellular location is the cell surface. The enzyme catalyses (2R)-2-phosphoglycerate = phosphoenolpyruvate + H2O. It participates in carbohydrate degradation; glycolysis; pyruvate from D-glyceraldehyde 3-phosphate: step 4/5. Catalyzes the reversible conversion of 2-phosphoglycerate (2-PG) into phosphoenolpyruvate (PEP). It is essential for the degradation of carbohydrates via glycolysis. In Lactobacillus johnsonii (strain CNCM I-12250 / La1 / NCC 533), this protein is Enolase 2.